The sequence spans 348 residues: Transmembrane protease serine 12 (348 aa).

The first 20 residues, 1–20, serve as a signal peptide directing secretion; the sequence is MRLGLLSVALLFVGSSHLYS. Residues 21–324 are Extracellular-facing; the sequence is DHYSPSGRHR…EHFFHASTQG (304 aa). The disordered stretch occupies residues 24 to 46; the sequence is SPSGRHRLGPSPEPAASSQQAEA. Positions 78-318 constitute a Peptidase S1 domain; sequence IIGGTEAQAG…YQKWLTEHFF (241 aa). An intrachain disulfide couples Cys107 to Cys123. Active-site charge relay system residues include His122 and Asp171. Cystine bridges form between Cys206–Cys274, Cys237–Cys253, and Cys264–Cys294. Asn219 and Asn249 each carry an N-linked (GlcNAc...) asparagine glycan. Ser268 serves as the catalytic Charge relay system. Residues 325 to 345 form a helical membrane-spanning segment; sequence ILTINILRGQILIALCFVILL. Topologically, residues 346–348 are cytoplasmic; it reads ATT.

This sequence belongs to the peptidase S1 family. In terms of tissue distribution, in testis, expressed in spermatocytes and spermatids (at protein level).

It is found in the cell membrane. The protein localises to the cytoplasmic vesicle. The protein resides in the secretory vesicle. Its subcellular location is the acrosome. In terms of biological role, required for male fertility. Plays a critical role in sperm capacitation and acrosome reactions during fertilization, and also plays a role in the regulation of proteins involved in spermatogenesis. Regulates protein pathways that promote chromosomal synapsis formation, double-strand break repair, formation of the inner mitochondrial membrane cristae and apoptosis in developing sperm. Required for normal sperm motility and binding to the zona pellucida, potentially via a role in ADAM3 protein maturation. The polypeptide is Transmembrane protease serine 12 (Homo sapiens (Human)).